The sequence spans 193 residues: AP-3 complex subunit sigma-1 (193 aa).

Serine 191 is modified (phosphoserine).

Belongs to the adaptor complexes small subunit family. Adaptor protein complex 3 (AP-3) is a heterotetramer composed of two large adaptins (delta-type subunit AP3D1 and beta-type subunit AP3B1 or AP3B2), a medium adaptin (mu-type subunit AP3M1 or AP3M2) and a small adaptin (sigma-type subunit APS1 or AP3S2). Interacts with AGAP1. AP-3 associates with the BLOC-1 complex.

It is found in the golgi apparatus. The protein localises to the cytoplasmic vesicle membrane. Its function is as follows. Part of the AP-3 complex, an adaptor-related complex which is not clathrin-associated. The complex is associated with the Golgi region as well as more peripheral structures. It facilitates the budding of vesicles from the Golgi membrane and may be directly involved in trafficking to lysosomes. In concert with the BLOC-1 complex, AP-3 is required to target cargos into vesicles assembled at cell bodies for delivery into neurites and nerve terminals. This Bos taurus (Bovine) protein is AP-3 complex subunit sigma-1 (AP3S1).